Here is a 1332-residue protein sequence, read N- to C-terminus: Aldehyde oxidase 1 (1332 aa).

The 2Fe-2S ferredoxin-type domain occupies 4–91; that stretch reads STLYFYVNGR…GAAVTTVEGV (88 aa). The [2Fe-2S] cluster site is built by Cys-43, Cys-48, Cys-51, and Cys-73. Residue Gln-112 coordinates Mo-molybdopterin. [2Fe-2S] cluster contacts are provided by Cys-113, Cys-116, Cys-148, and Cys-150. Cys-150 contributes to the Mo-molybdopterin binding site. The FAD-binding PCMH-type domain maps to 234–419; that stretch reads FTGDRVTWIS…LSVTIPYSRK (186 aa). Residues 262-269, Ala-343, Ser-352, His-356, Asp-365, and Leu-409 contribute to the FAD site; that span reads VVMGNTSV. Mo-molybdopterin is bound by residues 800–801, Met-1041, 1082–1085, Gln-1197, and Leu-1262; these read AF and GSVV. Glu-1264 (proton acceptor; for azaheterocycle hydroxylase activity) is an active-site residue.

The protein belongs to the xanthine dehydrogenase family. Homodimer. The cofactor is [2Fe-2S] cluster. Requires FAD as cofactor. It depends on Mo-molybdopterin as a cofactor. Expressed in liver.

Its subcellular location is the cytoplasm. The enzyme catalyses an aldehyde + O2 + H2O = a carboxylate + H2O2 + H(+). It catalyses the reaction retinal + O2 + H2O = retinoate + H2O2 + H(+). Its activity is regulated as follows. Inhibited by menadione and isovanillin. Not inhibited by allopurinol, a xanthine dehydrogenase potent inhibitor. Its function is as follows. Oxidase with broad substrate specificity, oxidizing aromatic azaheterocycles, such as N1-methylnicotinamide, N-methylphthalazinium and phthalazine, as well as aldehydes, such as benzaldehyde, retinal, pyridoxal, and vanillin. Plays a key role in the metabolism of xenobiotics and drugs containing aromatic azaheterocyclic substituents. Participates in the bioactivation of prodrugs such as famciclovir, catalyzing the oxidation step from 6-deoxypenciclovir to penciclovir, which is a potent antiviral agent. Is probably involved in the regulation of reactive oxygen species homeostasis. May be a prominent source of superoxide generation via the one-electron reduction of molecular oxygen. May also catalyze nitric oxide (NO) production via the reduction of nitrite to NO with NADH or aldehyde as electron donor. May play a role in adipogenesis. This chain is Aldehyde oxidase 1, found in Cavia porcellus (Guinea pig).